The primary structure comprises 446 residues: BAG family molecular chaperone regulator 7 (446 aa).

The tract at residues 230-252 (TGGEKKKKHEEKEKKEKIETKSK) is disordered. Basic and acidic residues predominate over residues 239–250 (EEKEKKEKIETK). Positions 303–332 (PEYAAVMIQRAFKAYLIRRSKSLRALRDLA) constitute an IQ domain. A BAG domain is found at 330-407 (DLAIAKTKLK…AMLDVVDPQP (78 aa)). Thr-443 carries the post-translational modification Phosphothreonine.

In terms of assembly, binds to the ATPase domain of HSP70/HSC70 chaperones. Interacts with HSP70-11/BIP2.

The protein resides in the endoplasmic reticulum. In terms of biological role, co-chaperone that regulates diverse cellular pathways, such as programmed cell death and stress responses. Necessary for the proper maintenance of the unfolded protein response (UPR) during heat and cold tolerance. In Arabidopsis thaliana (Mouse-ear cress), this protein is BAG family molecular chaperone regulator 7 (BAG7).